We begin with the raw amino-acid sequence, 161 residues long: Protein lin-52 (161 aa).

The interval 137-161 is disordered; sequence TGSASPRYLQPTPPKNVAEETTGSQ.

The protein belongs to the lin-52 family. In terms of assembly, component of the DRM complex, at least composed of lin-9, lin-35, lin-37, lin-52, lin-53, lin-54- dpl-1 and efl-1. Interacts with zft-11; the interaction is required to suppress the activation of non-neuronal genes in neurons.

Its subcellular location is the nucleus. In terms of biological role, synthetic multivulva class B (synMuvB) protein. SynMuvB proteins are required to repress the induction of vulval development by Ras signaling and probably act by forming the multiprotein DRM complex that represses transcription. In association with the zinc finger protein ztf-11, negatively regulates the expression of non-neuronal genes during neurogenesis. In Caenorhabditis elegans, this protein is Protein lin-52.